A 338-amino-acid polypeptide reads, in one-letter code: Phenylalanine--tRNA ligase alpha subunit (338 aa).

E252 provides a ligand contact to Mg(2+).

The protein belongs to the class-II aminoacyl-tRNA synthetase family. Phe-tRNA synthetase alpha subunit type 1 subfamily. Tetramer of two alpha and two beta subunits. Requires Mg(2+) as cofactor.

Its subcellular location is the cytoplasm. The catalysed reaction is tRNA(Phe) + L-phenylalanine + ATP = L-phenylalanyl-tRNA(Phe) + AMP + diphosphate + H(+). The protein is Phenylalanine--tRNA ligase alpha subunit of Pseudomonas paraeruginosa (strain DSM 24068 / PA7) (Pseudomonas aeruginosa (strain PA7)).